The sequence spans 452 residues: Protoheme IX farnesyltransferase, mitochondrial (452 aa).

Residues 1 to 27 (MSLVIQPLLMRALNPNLSSILISGRGF) constitute a mitochondrion transit peptide. Transmembrane regions (helical) follow at residues 152 to 172 (VLVMLSAICSYALSPYPATVL), 235 to 255 (ILWLGVNPTVAFLGFSNIALY), 267 to 287 (IINTWVGALVGAIPPLMGWAA), 291 to 311 (LSHPGAWCLAGLLYAWQFPHF), 341 to 361 (VALRYSLLMFPLCFGLSYFNV), 364 to 386 (WYYQLDSAFVNAWMSLWAFKFYF), and 417 to 437 (TFWVSVLHLPAVLILAILHKK).

The protein belongs to the UbiA prenyltransferase family.

It localises to the mitochondrion membrane. Its function is as follows. Converts protoheme IX and farnesyl diphosphate to heme O. The polypeptide is Protoheme IX farnesyltransferase, mitochondrial (COX10) (Kluyveromyces lactis (strain ATCC 8585 / CBS 2359 / DSM 70799 / NBRC 1267 / NRRL Y-1140 / WM37) (Yeast)).